The chain runs to 643 residues: Enzymatic polyprotein (643 aa).

Residues 6–209 (NPNATFITVK…KEVNVPNNIP (204 aa)) form the Peptidase A3A domain. The active-site For protease activity is D26. In terms of domain architecture, Reverse transcriptase spans 226 to 410 (VRKGIIEESK…QTIDFLGLTL (185 aa)). Residues D296, D360, and D361 each contribute to the Mg(2+) site.

The protein belongs to the caulimoviridae enzymatic polyprotein family.

The enzyme catalyses DNA(n) + a 2'-deoxyribonucleoside 5'-triphosphate = DNA(n+1) + diphosphate. Encodes for at least two polypeptides: protease (PR) and reverse transcriptase (RT). The protease processes the polyprotein in cis. Reverse transcriptase is multifunctional enzyme that converts the viral RNA genome into dsDNA in viral cytoplasmic capsids. This enzyme displays a DNA polymerase activity that can copy either DNA or RNA templates, and a ribonuclease H (RNase H) activity that cleaves the RNA strand of RNA-DNA heteroduplexes in a partially processive 3'- to 5'-endonucleasic mode. Neo-synthesized pregenomic RNA (pgRNA) are encapsidated, and reverse-transcribed inside the nucleocapsid. Partial (+)DNA is synthesized from the (-)DNA template and generates the relaxed circular DNA (RC-DNA) genome. After budding and infection, the RC-DNA migrates in the nucleus, and is converted into a plasmid-like covalently closed circular DNA (cccDNA). The chain is Enzymatic polyprotein from Cestrum parqui (CmYLCV).